Here is a 541-residue protein sequence, read N- to C-terminus: Arginine--tRNA ligase (541 aa).

The short motif at 123-133 is the 'HIGH' region element; it reads ANPTGFLHIGH.

The protein belongs to the class-I aminoacyl-tRNA synthetase family. In terms of assembly, monomer.

The protein localises to the cytoplasm. It catalyses the reaction tRNA(Arg) + L-arginine + ATP = L-arginyl-tRNA(Arg) + AMP + diphosphate. This Metamycoplasma arthritidis (strain 158L3-1) (Mycoplasma arthritidis) protein is Arginine--tRNA ligase.